Consider the following 143-residue polypeptide: Large ribosomal subunit protein uL11 (143 aa).

The protein belongs to the universal ribosomal protein uL11 family. As to quaternary structure, part of the ribosomal stalk of the 50S ribosomal subunit. Interacts with L10 and the large rRNA to form the base of the stalk. L10 forms an elongated spine to which L12 dimers bind in a sequential fashion forming a multimeric L10(L12)X complex. Post-translationally, one or more lysine residues are methylated.

Its function is as follows. Forms part of the ribosomal stalk which helps the ribosome interact with GTP-bound translation factors. The sequence is that of Large ribosomal subunit protein uL11 from Pseudomonas syringae pv. tomato (strain ATCC BAA-871 / DC3000).